The chain runs to 74 residues: MNTATCFIVLLVVATVIGGIEAGESDMRKDVMGLFRRVICTGADSPCAACCPCCPGTSCKAESNGVSYCRKDEP.

A signal peptide spans 1 to 22; the sequence is MNTATCFIVLLVVATVIGGIEA. A propeptide spanning residues 23–35 is cleaved from the precursor; the sequence is GESDMRKDVMGLF. 4 disulfides stabilise this stretch: Cys40/Cys54, Cys47/Cys59, Cys50/Cys51, and Cys53/Cys69.

It belongs to the neurotoxin 11 (kappa toxin) family. In terms of tissue distribution, expressed by the venom gland.

Its subcellular location is the secreted. Its function is as follows. This excitatory toxin inhibits insect calcium-activated potassium (KCa) channels (Slo-type). The sequence is that of Lambda-hexatoxin-Hv1d from Hadronyche versuta (Blue mountains funnel-web spider).